Reading from the N-terminus, the 156-residue chain is S-ribosylhomocysteine lyase (156 aa).

Positions 56, 60, and 123 each coordinate Fe cation.

This sequence belongs to the LuxS family. As to quaternary structure, homodimer. It depends on Fe cation as a cofactor.

It carries out the reaction S-(5-deoxy-D-ribos-5-yl)-L-homocysteine = (S)-4,5-dihydroxypentane-2,3-dione + L-homocysteine. Involved in the synthesis of autoinducer 2 (AI-2) which is secreted by bacteria and is used to communicate both the cell density and the metabolic potential of the environment. The regulation of gene expression in response to changes in cell density is called quorum sensing. Catalyzes the transformation of S-ribosylhomocysteine (RHC) to homocysteine (HC) and 4,5-dihydroxy-2,3-pentadione (DPD). The sequence is that of S-ribosylhomocysteine lyase from Staphylococcus aureus (strain bovine RF122 / ET3-1).